The sequence spans 78 residues: MKQIFIGIIRFYQKFISPMTPPTCRFYPTCSHYGLEAFQKHGAFKGFWLTCKRILKCHPFHPGGFDPVPDKKDDKVNS.

This sequence belongs to the UPF0161 family.

The protein localises to the cell membrane. Could be involved in insertion of integral membrane proteins into the membrane. The chain is Putative membrane protein insertion efficiency factor from Bacillus anthracis (strain A0248).